The primary structure comprises 217 residues: RNA chaperone ProQ (217 aa).

The disordered stretch occupies residues 105 to 166 (EAKARVQAQR…PREEQHTPVS (62 aa)). The span at 121 to 131 (KRERKPRPTTP) shows a compositional bias: basic residues. A compositionally biased stretch (basic and acidic residues) spans 132–162 (RRKEGAERKPRAQKPVEKAPKTVKAPREEQH).

The protein belongs to the ProQ family.

Its subcellular location is the cytoplasm. RNA chaperone with significant RNA binding, RNA strand exchange and RNA duplexing activities. May regulate ProP activity through an RNA-based, post-transcriptional mechanism. In Escherichia coli O8 (strain IAI1), this protein is RNA chaperone ProQ.